The chain runs to 466 residues: Citrate synthase, mitochondrial (466 aa).

The transit peptide at 1 to 27 directs the protein to the mitochondrion; that stretch reads MALLTAAARLLGAKNSSCLVLAARHAS. The short motif at 2–21 is the SIFI-degron element; the sequence is ALLTAAARLLGAKNSSCLVL. At Lys-57 the chain carries N6-succinyllysine. The residue at position 76 (Lys-76) is an N6-acetyllysine; alternate. Residue Lys-76 is modified to N6-succinyllysine; alternate. 2 positions are modified to N6-succinyllysine: Lys-103 and Lys-193. Ser-226 is subject to Phosphoserine. Residue His-301 is part of the active site. N6-acetyllysine; alternate occurs at positions 321 and 327. An N6-succinyllysine; alternate mark is found at Lys-321 and Lys-327. His-347 is an active-site residue. An oxaloacetate-binding site is contributed by Arg-356. At Lys-375 the chain carries N6-acetyllysine; alternate. An N6-succinyllysine; alternate modification is found at Lys-375. Lys-382 is modified (N6-acetyllysine). Lys-393 bears the N6-acetyllysine; alternate mark. Lys-393 bears the N6-succinyllysine; alternate mark. Lys-395 is modified (N6,N6,N6-trimethyllysine). The active site involves Asp-402. Oxaloacetate-binding residues include Arg-428 and Arg-448. At Lys-450 the chain carries N6-succinyllysine. Residue Lys-459 is modified to N6-acetyllysine; alternate. Residue Lys-459 is modified to N6-succinyllysine; alternate.

This sequence belongs to the citrate synthase family. As to quaternary structure, homodimer. Post-translationally, methylated. Trimethylation at Lys-395 by CSKMT decreases citrate synthase activity. In terms of processing, in response to mitochondrial stress, the precursor protein is ubiquitinated by the SIFI complex in the cytoplasm before mitochondrial import, leading to its degradation. Within the SIFI complex, UBR4 initiates ubiquitin chain that are further elongated or branched by KCMF1. In terms of tissue distribution, expressed in the head region and flagellum of epididymal sperm.

The protein resides in the mitochondrion matrix. It carries out the reaction oxaloacetate + acetyl-CoA + H2O = citrate + CoA + H(+). It functions in the pathway carbohydrate metabolism; tricarboxylic acid cycle; isocitrate from oxaloacetate: step 1/2. Key enzyme of the Krebs tricarboxylic acid cycle which catalyzes the synthesis of citrate from acetyl coenzyme A and oxaloacetate. The chain is Citrate synthase, mitochondrial (Cs) from Rattus norvegicus (Rat).